A 290-amino-acid chain; its full sequence is ATP synthase subunit a (290 aa).

Helical transmembrane passes span 44–64 (AFHV…ILLF), 104–124 (VIAP…AIDL), 161–181 (LSVF…GGFI), 194–214 (ILVQ…TLVA), 233–253 (VFIL…GMGV), and 260–280 (AVFH…LTIV).

This sequence belongs to the ATPase A chain family. In terms of assembly, F-type ATPases have 2 components, CF(1) - the catalytic core - and CF(0) - the membrane proton channel. CF(1) has five subunits: alpha(3), beta(3), gamma(1), delta(1), epsilon(1). CF(0) has three main subunits: a(1), b(2) and c(9-12). The alpha and beta chains form an alternating ring which encloses part of the gamma chain. CF(1) is attached to CF(0) by a central stalk formed by the gamma and epsilon chains, while a peripheral stalk is formed by the delta and b chains.

The protein resides in the cell inner membrane. Its function is as follows. Key component of the proton channel; it plays a direct role in the translocation of protons across the membrane. This Pseudomonas fluorescens (strain ATCC BAA-477 / NRRL B-23932 / Pf-5) protein is ATP synthase subunit a.